Consider the following 930-residue polypeptide: Translation initiation factor IF-2 (930 aa).

Residues 50–67 (FKPAAAPKVEAKPAAPKV) are compositionally biased toward low complexity. Disordered regions lie at residues 50-217 (FKPA…SSEE) and 260-346 (EVVP…HELP). 2 stretches are compositionally biased toward basic and acidic residues: residues 68–90 (SAEK…EAKP) and 110–125 (FKAE…AERR). Low complexity predominate over residues 129 to 141 (KGNNRDQQQNGNR). Composition is skewed to basic and acidic residues over residues 157–167 (RDNRRFNDQAK) and 262–295 (VPEK…DGPR). A compositionally biased stretch (low complexity) spans 309–318 (NQKNSNWNNN). Residues 337–346 (VTERKFHELP) show a composition bias toward basic and acidic residues. A tr-type G domain is found at 432–599 (ERPPVVTIMG…TVLLVAEIQE (168 aa)). The interval 441–448 (GHVDHGKT) is G1. 441–448 (GHVDHGKT) provides a ligand contact to GTP. Residues 466–470 (GITQH) form a G2 region. The segment at 487 to 490 (DTPG) is G3. GTP contacts are provided by residues 487-491 (DTPGH) and 541-544 (NKID). The segment at 541-544 (NKID) is G4. The G5 stretch occupies residues 577–579 (SAK).

Belongs to the TRAFAC class translation factor GTPase superfamily. Classic translation factor GTPase family. IF-2 subfamily.

The protein resides in the cytoplasm. In terms of biological role, one of the essential components for the initiation of protein synthesis. Protects formylmethionyl-tRNA from spontaneous hydrolysis and promotes its binding to the 30S ribosomal subunits. Also involved in the hydrolysis of GTP during the formation of the 70S ribosomal complex. In Streptococcus pneumoniae (strain CGSP14), this protein is Translation initiation factor IF-2.